A 784-amino-acid polypeptide reads, in one-letter code: LPS-assembly protein LptD (784 aa).

A signal peptide spans M1 to A24. Intrachain disulfides connect C31–C724 and C173–C725.

Belongs to the LptD family. Component of the lipopolysaccharide transport and assembly complex. Interacts with LptE and LptA. Post-translationally, contains two intramolecular disulfide bonds.

The protein localises to the cell outer membrane. In terms of biological role, together with LptE, is involved in the assembly of lipopolysaccharide (LPS) at the surface of the outer membrane. This Shigella flexneri serotype 5b (strain 8401) protein is LPS-assembly protein LptD.